The following is a 181-amino-acid chain: ADP-ribosylation factor 3 (181 aa).

Residue Gly2 is the site of N-myristoyl glycine attachment. Residues 24-31, 67-71, and 126-129 each bind GTP; these read GLDAAGKT, DVGGQ, and NKQD.

This sequence belongs to the small GTPase superfamily. Arf family. Interacts with PRKCABP. Interacts with PI4KB and NCS1/FREQ at the Golgi complex.

The protein localises to the golgi apparatus. The protein resides in the cytoplasm. It is found in the perinuclear region. GTP-binding protein that functions as an allosteric activator of the cholera toxin catalytic subunit, an ADP-ribosyltransferase. Involved in protein trafficking; may modulate vesicle budding and uncoating within the Golgi apparatus. This is ADP-ribosylation factor 3 (ARF3) from Bos taurus (Bovine).